A 732-amino-acid chain; its full sequence is Protein kinase YpkA (732 aa).

Residues 136-408 form the Protein kinase domain; sequence VAETDKFAEG…SNEARLHEFL (273 aa). ATP-binding positions include 142-150 and K163; that span reads FAEGESHIS. D270 functions as the Proton acceptor in the catalytic mechanism.

Belongs to the protein kinase superfamily. Ser/Thr protein kinase family.

It is found in the secreted. It catalyses the reaction L-seryl-[protein] + ATP = O-phospho-L-seryl-[protein] + ADP + H(+). It carries out the reaction L-threonyl-[protein] + ATP = O-phospho-L-threonyl-[protein] + ADP + H(+). Acts as a virulence determinant. In Yersinia pestis, this protein is Protein kinase YpkA (ypkA).